The primary structure comprises 995 residues: S1 RNA-binding domain-containing protein 1 (995 aa).

The disordered stretch occupies residues S23–S78. Residue K84 forms a Glycyl lysine isopeptide (Lys-Gly) (interchain with G-Cter in SUMO2) linkage. Over residues T116–K132 the composition is skewed to basic residues. The interval T116–T164 is disordered. A Glycyl lysine isopeptide (Lys-Gly) (interchain with G-Cter in SUMO2) cross-link involves residue K134. Over residues E146 to T159 the composition is skewed to low complexity. Glycyl lysine isopeptide (Lys-Gly) (interchain with G-Cter in SUMO2) cross-links involve residues K166, K167, and K183. K185 participates in a covalent cross-link: Glycyl lysine isopeptide (Lys-Gly) (interchain with G-Cter in SUMO1); alternate. Residue K185 forms a Glycyl lysine isopeptide (Lys-Gly) (interchain with G-Cter in SUMO2); alternate linkage. The stretch at A258 to E288 forms a coiled coil. S861 carries the post-translational modification Phosphoserine. Residues G919 to I992 form the S1 motif domain. K955 participates in a covalent cross-link: Glycyl lysine isopeptide (Lys-Gly) (interchain with G-Cter in SUMO2). S964 carries the phosphoserine modification.

This Pongo abelii (Sumatran orangutan) protein is S1 RNA-binding domain-containing protein 1 (SRBD1).